The following is a 488-amino-acid chain: Peptidoglycan endopeptidase LytF (488 aa).

Residues 1-26 (MKKKLAAGLTASAIVGTTLVVTPAEA) form the signal peptide. LysM domains lie at 27–70 (ATIK…TLTI) and 92–135 (SVYT…KLKV). Disordered regions lie at residues 70–93 (IPGS…GSSV), 137–176 (GTVS…TGTY), and 218–239 (KSSG…TSAT). Low complexity-rich tracts occupy residues 72–93 (GSKS…GSSV) and 140–172 (SSSS…SSSS). One can recognise a LysM 3 domain in the interval 174-217 (GTYKVQLGDSLWKIANKVNMSIAELKVLNNLKSDTIYVNQVLKT). A LysM 4 domain is found at 240 to 283 (TKYTVKSGDSLWKIANNYNLTVQQIRNINNLKSDVLYVGQVLKL). A disordered region spans residues 286-306 (KASSGSSSSSSSSSNASSGTT). Residues 307 to 350 (TTYTVKSGDSLWVIAQKFNVTAQQIREKNNLKTDVLQVGQKLVI) form the LysM 5 domain. The region spanning 370-488 (SAKINTMISA…QRYLGAKRYF (119 aa)) is the NlpC/P60 domain. Cys-400 acts as the Nucleophile in catalysis. His-449 functions as the Proton acceptor in the catalytic mechanism. Asn-461 is an active-site residue.

This sequence belongs to the peptidase C40 family.

Its subcellular location is the secreted. The protein resides in the cell wall. Is inhibited in vitro by para-hydroxymercuribenzoate, a sulfydryl inhibitor. Cell wall hydrolase that cleaves gamma-D-glutamate-meso-diaminopimelate bonds in peptidoglycan. LytF is necessary and sufficient for vegetative daughter cell separation, and also seems to play a role in cell autolysis. This Bacillus subtilis (strain 168) protein is Peptidoglycan endopeptidase LytF (lytF).